The primary structure comprises 335 residues: Glyceraldehyde-3-phosphate dehydrogenase 2 (335 aa).

NAD(+) is bound by residues 13-14 (RI), Asp-34, and Met-79. D-glyceraldehyde 3-phosphate contacts are provided by residues 151–153 (SCT), Thr-182, 211–212 (TG), and Arg-234. Cys-152 (nucleophile) is an active-site residue. Asn-316 is a binding site for NAD(+).

The protein belongs to the glyceraldehyde-3-phosphate dehydrogenase family. In terms of assembly, homotetramer.

It localises to the cytoplasm. It carries out the reaction D-glyceraldehyde 3-phosphate + phosphate + NAD(+) = (2R)-3-phospho-glyceroyl phosphate + NADH + H(+). Its pathway is carbohydrate degradation; glycolysis; pyruvate from D-glyceraldehyde 3-phosphate: step 1/5. Its function is as follows. Glyceraldehyde-3-phosphate dehydrogenase is a key enzyme in glycolysis that catalyzes the first step of the pathway by converting D-glyceraldehyde 3-phosphate (G3P) into 3-phospho-D-glyceroyl phosphate. This chain is Glyceraldehyde-3-phosphate dehydrogenase 2 (gapdh-2), found in Danio rerio (Zebrafish).